The sequence spans 327 residues: GTPase Obg (327 aa).

The 159-residue stretch at 2–160 folds into the Obg domain; the sequence is HLFKDSLNLI…LNLRLELSLI (159 aa). One can recognise an OBG-type G domain in the interval 161–326; the sequence is ADIGLVGLPN…LVSEFFSLVK (166 aa). GTP is bound by residues 167–174, 192–196, 213–216, 280–283, and 307–309; these read GLPNAGKS, FTTKI, DLPG, SKLD, and SIY. Mg(2+) is bound by residues S174 and T194.

This sequence belongs to the TRAFAC class OBG-HflX-like GTPase superfamily. OBG GTPase family. As to quaternary structure, monomer. Requires Mg(2+) as cofactor.

It is found in the cytoplasm. Functionally, an essential GTPase which binds GTP, GDP and possibly (p)ppGpp with moderate affinity, with high nucleotide exchange rates and a fairly low GTP hydrolysis rate. Plays a role in control of the cell cycle, stress response, ribosome biogenesis and in those bacteria that undergo differentiation, in morphogenesis control. The sequence is that of GTPase Obg from Borrelia duttonii (strain Ly).